The sequence spans 397 residues: Tryptophan synthase beta chain (397 aa).

Position 87 is an N6-(pyridoxal phosphate)lysine (Lys-87).

It belongs to the TrpB family. As to quaternary structure, tetramer of two alpha and two beta chains. Pyridoxal 5'-phosphate is required as a cofactor.

The catalysed reaction is (1S,2R)-1-C-(indol-3-yl)glycerol 3-phosphate + L-serine = D-glyceraldehyde 3-phosphate + L-tryptophan + H2O. It functions in the pathway amino-acid biosynthesis; L-tryptophan biosynthesis; L-tryptophan from chorismate: step 5/5. In terms of biological role, the beta subunit is responsible for the synthesis of L-tryptophan from indole and L-serine. This is Tryptophan synthase beta chain from Escherichia coli O157:H7.